The sequence spans 306 residues: Ribosomal protein L11 methyltransferase (306 aa).

The S-adenosyl-L-methionine site is built by Thr-154, Gly-179, Asp-201, and Asn-242.

It belongs to the methyltransferase superfamily. PrmA family.

It localises to the cytoplasm. The catalysed reaction is L-lysyl-[protein] + 3 S-adenosyl-L-methionine = N(6),N(6),N(6)-trimethyl-L-lysyl-[protein] + 3 S-adenosyl-L-homocysteine + 3 H(+). In terms of biological role, methylates ribosomal protein L11. This is Ribosomal protein L11 methyltransferase from Xanthomonas euvesicatoria pv. vesicatoria (strain 85-10) (Xanthomonas campestris pv. vesicatoria).